We begin with the raw amino-acid sequence, 254 residues long: Glucosamine-6-phosphate deaminase (254 aa).

The Proton acceptor; for enolization step role is filled by aspartate 65. Asparagine 134 serves as the catalytic For ring-opening step. Catalysis depends on histidine 136, which acts as the Proton acceptor; for ring-opening step. Glutamate 141 acts as the For ring-opening step in catalysis.

It belongs to the glucosamine/galactosamine-6-phosphate isomerase family. NagB subfamily.

It catalyses the reaction alpha-D-glucosamine 6-phosphate + H2O = beta-D-fructose 6-phosphate + NH4(+). The protein operates within amino-sugar metabolism; N-acetylneuraminate degradation; D-fructose 6-phosphate from N-acetylneuraminate: step 5/5. Functionally, catalyzes the reversible isomerization-deamination of glucosamine 6-phosphate (GlcN6P) to form fructose 6-phosphate (Fru6P) and ammonium ion. This Corynebacterium aurimucosum (strain ATCC 700975 / DSM 44827 / CIP 107346 / CN-1) (Corynebacterium nigricans) protein is Glucosamine-6-phosphate deaminase.